The following is a 150-amino-acid chain: Large ribosomal subunit protein bL9 (150 aa).

The protein belongs to the bacterial ribosomal protein bL9 family.

Binds to the 23S rRNA. The chain is Large ribosomal subunit protein bL9 from Alteromonas mediterranea (strain DSM 17117 / CIP 110805 / LMG 28347 / Deep ecotype).